The following is a 1715-amino-acid chain: Neurexin-2 (1715 aa).

Positions 1–29 (MALGSRWRPPPQLPPLLLLLALVAGVRGL) are cleaved as a signal peptide. The 177-residue stretch at 30–206 (EFGGGPGQWA…LRGAAADPLC (177 aa)) folds into the Laminin G-like 1 domain. Residues 30–1639 (EFGGGPGQWA…EVIRESSSTT (1610 aa)) are Extracellular-facing. A glycan (N-linked (GlcNAc...) asparagine) is linked at N60. Residues 202-242 (ADPLCAPARNPCANGGLCTVLAPGEVGCDCSHTGFGGKFCS) enclose the EGF-like 1 domain. Disulfide bonds link C206-C219, C213-C229, and C231-C241. 2 consecutive Laminin G-like domains span residues 289–486 (VATF…SFRC) and 493–686 (DPVT…APFC). D335 lines the Ca(2+) pocket. N338 carries an N-linked (GlcNAc...) asparagine glycan. L352 and M420 together coordinate Ca(2+). Intrachain disulfides connect C450–C486, C657–C686, C694–C705, C699–C714, and C716–C726. An EGF-like 2 domain is found at 690 to 727 (TLKQCASAPCRNGGICREGWNRFVCDCIGTGFLGRVCE). Laminin G-like domains lie at 732 to 907 (VLSY…ITYC) and 921 to 1096 (DPVT…ERGC). 2 residues coordinate Ca(2+): D779 and L796. N844 is a glycosylation site (N-linked (GlcNAc...) asparagine). Ca(2+) is bound at residue R857. 4 disulfide bridges follow: C1068-C1096, C1103-C1114, C1108-C1123, and C1125-C1135. Positions 1099–1136 (PSTTCTEESCANQGVCLQQWDGFTCDCTMTSYGGPVCN) constitute an EGF-like 3 domain. The 209-residue stretch at 1140-1348 (TTYIFGKGGA…HLRLVGEGPS (209 aa)) folds into the Laminin G-like 6 domain. The Ca(2+) site is built by D1192 and V1209. An N-linked (GlcNAc...) asparagine glycan is attached at N1239. Ca(2+) contacts are provided by I1291 and N1293. Residue S1403 is glycosylated (O-linked (Xyl...) (heparan sulfate) serine). 3 disordered regions span residues 1461-1511 (ATQD…LPPT), 1529-1549 (LLSP…ATGA), and 1583-1626 (LGPG…RGPP). The helical transmembrane segment at 1640-1660 (GMVVGIVAAAALCILILLYAM) threads the bilayer. Residues 1661–1715 (YKYRNRDEGSYQVDQSRNYISNSAQSNGAVVKEKAPAAPKTPSKAKKNKDKEYYV) are Cytoplasmic-facing. The segment at 1682-1715 (NSAQSNGAVVKEKAPAAPKTPSKAKKNKDKEYYV) is disordered.

It belongs to the neurexin family. In terms of assembly, the laminin G-like domain 1 binds to NXPH1. Interacts with PATJ. Interacts with CBLN1, CBLN2 and, less avidly, with CBLN4. Specific isoforms bind neuroligins NLGN1, NLGN2 and NLGN3. Isoform 5c/alpha-2C binds to alpha-dystroglycan. Interacts (via Laminin G-like 1 domain) with IGSF21 (Ig-like 1 domain) in a trans-interaction manner. Interacts with CLSTN3. In terms of processing, O-glycosylated; contains heparan sulfate. Heparan sulfate attachment is required for synapse development by mediating interactions with neuroligins. In terms of tissue distribution, brain (neuronal synapse).

It localises to the presynaptic cell membrane. Its function is as follows. Neuronal cell surface protein that may be involved in cell recognition and cell adhesion. May mediate intracellular signaling. This chain is Neurexin-2 (Nrxn2), found in Rattus norvegicus (Rat).